We begin with the raw amino-acid sequence, 770 residues long: Amyloid-beta precursor protein (770 aa).

A signal peptide spans 1 to 17 (MLPSLALLLLAAWTVRA). Topologically, residues 18-701 (LEVPTDGNAG…AEDVGSNKGA (684 aa)) are extracellular. Residues 28–123 (LLAEPQIAMF…PYRCLVGEFV (96 aa)) are GFLD subdomain. The E1 domain maps to 28–189 (LLAEPQIAMF…RGVEFVCCPL (162 aa)). Cystine bridges form between C38/C62, C73/C117, C98/C105, C133/C187, C144/C174, and C158/C186. 96–110 (NWCKRGRKQCKTHTH) provides a ligand contact to heparin. The interval 131 to 189 (DKCKFLHQERMDVCETHLHWHTVAKETCSEKSTNLHDYGMLLPCGIDKFRGVEFVCCPL) is cuBD subdomain. Residues H147, H151, and Y168 each coordinate Cu(2+). A zinc-binding region spans residues 181–188 (GVEFVCCP). Residues E183, C186, and C187 each coordinate Zn(2+). Residues 193–207 (SDSVDSADAEEDDSD) are compositionally biased toward acidic residues. The disordered stretch occupies residues 193-284 (SDSVDSADAE…TTTTTTESVE (92 aa)). At S198 the chain carries Phosphoserine; by CK2. S206 is subject to Phosphoserine; by CK1. 2 positions are modified to sulfotyrosine: Y217 and Y262. Residues 228–264 (VAEEEEVADVEEEEADDDEDVEDGDEVEEEAEEPYEE) show a composition bias toward acidic residues. Residues 268–281 (RTTSTATTTTTTTE) show a composition bias toward low complexity. Intrachain disulfides connect C291-C341, C300-C324, and C316-C337. The BPTI/Kunitz inhibitor domain maps to 291–341 (CSEQAETGPCRAMISRWYFDVTEGKCVPFFYGGCGGNRNNFDTEEYCMAVC). Y336 carries the post-translational modification Sulfotyrosine. The OX-2 motif lies at 344–365 (VSTQSLLKTTSEPLPQDPDKLP). The E2 domain maps to 374–565 (AVDKYLETPG…EEIQDEVDEL (192 aa)). Residues 391–423 (FQKAKERLEAKHRERMSQVMREWEEAERQAKNL) form a heparin-binding region. A Phosphoserine modification is found at S441. The tract at residues 491 to 522 (FNMLKKYVRAEQKDRQHTLKHFEHVRMVDPKK) is heparin-binding. Position 497 is a phosphotyrosine (Y497). The tract at residues 523 to 540 (AAQIRSQVMTHLRVIYER) is collagen-binding. N542 and N571 each carry an N-linked (GlcNAc...) asparagine glycan. The Cu(2+) site is built by H677 and H685. 2 residues coordinate Zn(2+): H677 and H685. The interaction with PSEN1 stretch occupies residues 695–722 (VGSNKGAIIGLMVGGVVIATVIVITLVM). The chain crosses the membrane as a helical span at residues 702-722 (IIGLMVGGVVIATVIVITLVM). At 723–770 (LKKKQYTSIHHGVVEVDAAVTPEERHLSKMQQNGYENPTYKFFEQMQN) the chain is on the cytoplasmic side. The Basolateral sorting signal motif lies at 724 to 734 (KKKQYTSIHHG). T729 is modified (phosphothreonine). S730 is subject to Phosphoserine; by APP-kinase I. Residues 732–751 (HHGVVEVDAAVTPEERHLSK) form an interaction with G(o)-alpha region. T743 carries the post-translational modification Phosphothreonine; by CDK5 and MAPK10 and LRRK2. An interaction with DAB2 region spans residues 756 to 770 (GYENPTYKFFEQMQN). The required for the interaction with KIF5B and for anterograde transport in axons stretch occupies residues 756-770 (GYENPTYKFFEQMQN). The residue at position 757 (Y757) is a Phosphotyrosine; by ABL1. A YENPXY motif; contains endocytosis signal motif is present at residues 757–762 (YENPTY). A Glycyl lysine isopeptide (Lys-Gly) (interchain with G-Cter in ubiquitin) cross-link involves residue K763.

This sequence belongs to the APP family. Binds, via its C-terminus, to the PID domain of several cytoplasmic proteins, including APBB family members, the APBA family, MAPK8IP1, SHC1, NUMB and DAB1. Binding to DAB1 inhibits its serine phosphorylation. Interacts (via NPXY motif) with DAB2 (via PID domain); the interaction is impaired by tyrosine phosphorylation of the NPXY motif. Also interacts with GPCR-like protein BPP, APPBP1, IB1, KNS2 (via its TPR domains), APPBP2 (via BaSS) and DDB1. In vitro, it binds MAPT via the MT-binding domains. Associates with microtubules in the presence of ATP and in a kinesin-dependent manner. Interacts, through a C-terminal domain, with GNAO1. Amyloid-beta protein 42 binds CHRNA7 in hippocampal neurons. Amyloid-beta associates with HADH2. Interacts with ANKS1B and AGER. Interacts with CPEB1. Interacts with ITM2B. Interacts with ITM2C. Interacts with IDE. Can form homodimers; dimerization is enhanced in the presence of Cu(2+) ions. Can form homodimers; this is promoted by heparin binding. Amyloid-beta protein 40 interacts with S100A9. CTF-alpha product of APP interacts with GSAP. Isoform APP695 interacts with SORL1 (via N-terminal ectodomain); this interaction retains APP in the trans-Golgi network and reduces processing into soluble APP-alpha and amyloid-beta peptides. The C99 fragment also interacts with SORL1. Isoform APP751 interacts with SORL1. Isoform APP770 interacts with SORL1. Interacts with PLD3. Interacts with VDAC1. Interacts with NSG1; could regulate APP processing. Amyloid-beta protein 42 interacts with FPR2. Interacts with SYT7. Interacts (via transmembrane region) with PSEN1; the interaction is direct. Interacts with LRRK2. Interacts (via cytoplasmic domain) with KIF5B. Interacts (via C-terminus) with APBB2/FE65L1 (via C-terminus). Interacts (via intracellular domain) with APBB3. Post-translationally, proteolytically processed under normal cellular conditions. Cleavage either by alpha-secretase, beta-secretase or theta-secretase leads to generation and extracellular release of soluble APP peptides, S-APP-alpha and S-APP-beta, and the retention of corresponding membrane-anchored C-terminal fragments, C80, C83 and C99. Subsequent processing of C80 and C83 by gamma-secretase yields P3 peptides. This is the major secretory pathway and is non-amyloidogenic. Alternatively, presenilin/nicastrin-mediated gamma-secretase processing of C99 releases the amyloid-beta proteins, amyloid-beta protein 40 and amyloid-beta protein 42, major components of amyloid plaques, and the cytotoxic C-terminal fragments, gamma-CTF(50), gamma-CTF(57) and gamma-CTF(59). PSEN1 cleavage is more efficient with C83 than with C99 as substrate (in vitro). Amyloid-beta protein 40 and Amyloid-beta protein 42 are cleaved by ACE. Many other minor amyloid-beta peptides, amyloid-beta 1-X peptides, are found in cerebral spinal fluid (CSF) including the amyloid-beta X-15 peptides, produced from the cleavage by alpha-secretase. In terms of processing, proteolytically cleaved by caspases during neuronal apoptosis. Cleavage at Asp-739 by either CASP6, CASP8 or CASP9 results in the production of the neurotoxic C31 peptide and the increased production of amyloid-beta peptides. N- and O-glycosylated. Post-translationally, phosphorylation in the C-terminal on tyrosine, threonine and serine residues is neuron-specific. Phosphorylation can affect APP processing, neuronal differentiation and interaction with other proteins. Phosphorylated on Thr-743 in neuronal cells by Cdc5 kinase and Mapk10, in dividing cells by Cdc2 kinase in a cell-cycle dependent manner with maximal levels at the G2/M phase and, in vitro, by GSK-3-beta. The Thr-743 phosphorylated form causes a conformational change which reduces binding of Fe65 family members. In dopaminergic (DA) neurons, phosphorylation on Thr-743 by LRKK2 promotes the production and the nuclear translocation of the APP intracellular domain (AICD) which induces DA neuron apoptosis. Phosphorylation on Tyr-757 is required for SHC binding. Phosphorylated in the extracellular domain by casein kinases on both soluble and membrane-bound APP. This phosphorylation is inhibited by heparin. In terms of processing, extracellular binding and reduction of copper, results in a corresponding oxidation of Cys-144 and Cys-158, and the formation of a disulfide bond. Trophic-factor deprivation triggers the cleavage of surface APP by beta-secretase to release sAPP-beta which is further cleaved to release an N-terminal fragment of APP (N-APP). Post-translationally, amyloid-beta peptides are degraded by IDE. In terms of processing, sulfated on tyrosine residues. In terms of tissue distribution, expressed in the brain with expression in cortex, cerebellum, hippocampus, olfactory bulb, neurons, astrocytes and microglia (at protein level). Expressed in the retinal lens. Expressed at a low level in muscle cells (at protein level). As to expression, expressed in kidney. Widely expressed. Expressed in several different brain regions including hippocampus, substantia nigra pars compacta and cerebellum. Within the cerebellum, abundantly expressed in Purkinje cells. In terms of tissue distribution, expressed in the brain, kidney and liver. Expressed in several different brain regions including hippocampus, substantia nigra pars compacta and cerebellum. Within the cerebellum, abundantly expressed in Purkinje cells. As to expression, expressed in several different brain regions including hippocampus, substantia nigra pars compacta and cerebellum. Within the cerebellum, abundantly expressed in Purkinje cells.

Its subcellular location is the cell membrane. It is found in the membrane. The protein localises to the perikaryon. It localises to the cell projection. The protein resides in the growth cone. Its subcellular location is the clathrin-coated pit. It is found in the early endosome. The protein localises to the cytoplasmic vesicle. It localises to the golgi apparatus. The protein resides in the trans-Golgi network. Its subcellular location is the endoplasmic reticulum. It is found in the secreted. The protein localises to the cell surface. It localises to the nucleus. The protein resides in the cytoplasm. Functions as a cell surface receptor and performs physiological functions on the surface of neurons relevant to neurite growth, neuronal adhesion and axonogenesis. Interaction between APP molecules on neighboring cells promotes synaptogenesis. Involved in cell mobility and transcription regulation through protein-protein interactions. Can promote transcription activation through binding to APBB1-KAT5 and inhibit Notch signaling through interaction with Numb. Couples to apoptosis-inducing pathways such as those mediated by G(o) and JIP. Inhibits G(o)-alpha ATPase activity. Acts as a kinesin I membrane receptor, mediating the axonal transport of beta-secretase and presenilin 1. By acting as a kinesin I membrane receptor, plays a role in axonal anterograde transport of cargo towards synapses in axons. May be involved in copper homeostasis/oxidative stress through copper ion reduction. Can regulate neurite outgrowth through binding to components of the extracellular matrix such as heparin and collagen I and IV. The splice isoforms that contain the BPTI domain possess protease inhibitor activity. Induces a AGER-dependent pathway that involves activation of p38 MAPK, resulting in internalization of amyloid-beta peptide and leading to mitochondrial dysfunction in cultured cortical neurons. Provides Cu(2+) ions for GPC1 which are required for release of nitric oxide (NO) and subsequent degradation of the heparan sulfate chains on GPC1. In terms of biological role, amyloid-beta peptides are lipophilic metal chelators with metal-reducing activity. Binds transient metals such as copper, zinc and iron. Rat and mouse amyloid-beta peptides bind only weakly transient metals and have little reducing activity due to substitutions of transient metal chelating residues. Amyloid-beta protein 42 may activate mononuclear phagocytes in the brain and elicit inflammatory responses. Promotes both tau aggregation and TPK II-mediated phosphorylation. Also binds GPC1 in lipid rafts. Its function is as follows. The gamma-CTF peptides as well as the caspase-cleaved peptides, including C31, are potent enhancers of neuronal apoptosis. The chain is Amyloid-beta precursor protein from Mus musculus (Mouse).